The primary structure comprises 36 residues: uncharacterized protein (36 aa).

The span at 1–14 (MNQLGSGPTKQGVA) shows a compositional bias: polar residues. The segment at 1 to 36 (MNQLGSGPTKQGVATNTGSTGTTKNNSNLSGKGWVL) is disordered. Residues 15–36 (TNTGSTGTTKNNSNLSGKGWVL) are compositionally biased toward low complexity.

This is an uncharacterized protein from Dictyostelium discoideum (Social amoeba).